Here is a 483-residue protein sequence, read N- to C-terminus: MWYTSTRGMAPRVNFEGALFSGYAPDGGLYMPEELPRLDEETLRHWSTLSYRSLVKELCALFIGLELIPRHDLNDLIDRAFSRFRHRNVVHLCKLKNGLNILELWHGVTYAFKDLSLSCTAQFLQYFLEKKKKHVTIVVGTSGDTGSAAIESVQGSKNVDIIVLLPKGHCSKIQELQMTTVLKENVHVFEVEGNSDELDEPIKAVFADVAFVQRHNVMSLNSINWSRVLVQMAHHFFAYFQCTPSLDTHPLPTVEVVVPTGAGGNLAAGCIAQKMGLPICLVVAVNRNDIIHRTVQKGDFSLCEVLRTTLASAMDIQVPYNMERIFWLLSGSDSQTTRALMEQFERTQSLQLPKDLHNKLSEAVTSESVTDEAITQTMARCWEENQYLLCPHSATAVNYHYQQTDSGQSSIRCCLASASAVKFPEAVQAAGLTPETPAEILALEHKETRCIPMRRGDDWTQMLRVTIEGLSQRWKDCVVNPSE.

Residue K113 is modified to N6-(pyridoxal phosphate)lysine.

Belongs to the threonine synthase family. Pyridoxal 5'-phosphate is required as a cofactor.

In terms of biological role, acts as a catabolic phospho-lyase on both gamma- and beta-phosphorylated substrates. Degrades O-phospho-threonine (PThr) to alpha-ketobutyrate, ammonia and phosphate. Also degrades O-phospho-homoserine (PHS), but this is not its physiological substrate. The chain is Threonine synthase-like 2 (Thnsl2) from Mus musculus (Mouse).